A 110-amino-acid chain; its full sequence is uncharacterized protein (110 aa).

A helical transmembrane segment spans residues Leu88 to Leu108.

Its subcellular location is the membrane. This is an uncharacterized protein from Rickettsia prowazekii (strain Madrid E).